Reading from the N-terminus, the 83-residue chain is Exodeoxyribonuclease 7 small subunit (83 aa).

Belongs to the XseB family. Heterooligomer composed of large and small subunits.

It is found in the cytoplasm. It carries out the reaction Exonucleolytic cleavage in either 5'- to 3'- or 3'- to 5'-direction to yield nucleoside 5'-phosphates.. Functionally, bidirectionally degrades single-stranded DNA into large acid-insoluble oligonucleotides, which are then degraded further into small acid-soluble oligonucleotides. This is Exodeoxyribonuclease 7 small subunit from Moorella thermoacetica (strain ATCC 39073 / JCM 9320).